The chain runs to 93 residues: Alpha-defensin 16 (93 aa).

Positions 1 to 19 (MKTLILLSALVLLAFQVQA) are cleaved as a signal peptide. Positions 20–58 (DPIQNTDEETKTEEQPGEEDQAVSVSFGDPEGTSLQEES) are excised as a propeptide. Positions 22-54 (IQNTDEETKTEEQPGEEDQAVSVSFGDPEGTSL) are disordered. Disulfide bonds link Cys-64/Cys-92, Cys-66/Cys-81, and Cys-71/Cys-91.

This sequence belongs to the alpha-defensin family. As to expression, paneth cells of the small bowel.

It localises to the secreted. In terms of biological role, probably contributes to the antimicrobial barrier function of the small bowel mucosa. The polypeptide is Alpha-defensin 16 (Defa16) (Mus musculus (Mouse)).